The following is a 620-amino-acid chain: 1-deoxy-D-xylulose-5-phosphate synthase (620 aa).

Thiamine diphosphate contacts are provided by residues histidine 80 and 121-123 (GHS). Aspartate 152 serves as a coordination point for Mg(2+). Residues 153–154 (GA), asparagine 181, tyrosine 288, and glutamate 370 contribute to the thiamine diphosphate site. Asparagine 181 provides a ligand contact to Mg(2+).

It belongs to the transketolase family. DXPS subfamily. In terms of assembly, homodimer. The cofactor is Mg(2+). Thiamine diphosphate is required as a cofactor.

The catalysed reaction is D-glyceraldehyde 3-phosphate + pyruvate + H(+) = 1-deoxy-D-xylulose 5-phosphate + CO2. Its pathway is metabolic intermediate biosynthesis; 1-deoxy-D-xylulose 5-phosphate biosynthesis; 1-deoxy-D-xylulose 5-phosphate from D-glyceraldehyde 3-phosphate and pyruvate: step 1/1. Its function is as follows. Catalyzes the acyloin condensation reaction between C atoms 2 and 3 of pyruvate and glyceraldehyde 3-phosphate to yield 1-deoxy-D-xylulose-5-phosphate (DXP). The sequence is that of 1-deoxy-D-xylulose-5-phosphate synthase from Cronobacter sakazakii (strain ATCC BAA-894) (Enterobacter sakazakii).